The primary structure comprises 324 residues: Beta-ketoacyl-[acyl-carrier-protein] synthase III (324 aa).

Catalysis depends on residues cysteine 112 and histidine 249. The tract at residues 250–254 is ACP-binding; it reads QANDR. Residue asparagine 279 is part of the active site.

The protein belongs to the thiolase-like superfamily. FabH family. As to quaternary structure, homodimer.

It is found in the cytoplasm. It catalyses the reaction malonyl-[ACP] + acetyl-CoA + H(+) = 3-oxobutanoyl-[ACP] + CO2 + CoA. The protein operates within lipid metabolism; fatty acid biosynthesis. Catalyzes the condensation reaction of fatty acid synthesis by the addition to an acyl acceptor of two carbons from malonyl-ACP. Catalyzes the first condensation reaction which initiates fatty acid synthesis and may therefore play a role in governing the total rate of fatty acid production. Possesses both acetoacetyl-ACP synthase and acetyl transacylase activities. Its substrate specificity determines the biosynthesis of branched-chain and/or straight-chain of fatty acids. This Streptococcus pneumoniae serotype 19F (strain G54) protein is Beta-ketoacyl-[acyl-carrier-protein] synthase III.